A 786-amino-acid polypeptide reads, in one-letter code: Signal transducer and activator of transcription 5B (786 aa).

Position 90 is a phosphotyrosine (Tyr-90). Phosphoserine is present on Ser-128. In terms of domain architecture, SH2 spans 589-686 (WNDGAILGFV…EVYSKYYTPV (98 aa)). A phosphotyrosine mark is found at Tyr-682 and Tyr-699.

Belongs to the transcription factor STAT family. As to quaternary structure, upon activation, forms a homodimer or a heterodimer with a related family member. Binds NR3C1. Interacts with NCOA1. Interacts with NMI. Interacts with SOCS7. Interacts (via SH2 domain) with INSR. Interacts with CPEB3; this inhibits STAT5B-mediated transcriptional activation. Tyrosine phosphorylated in response to signaling via activated KIT, resulting in translocation to the nucleus. Tyrosine phosphorylated in response to signaling via activated FLT3; wild-type FLT3 results in much weaker phosphorylation than constitutively activated mutant FLT3. Alternatively, can be phosphorylated by JAK2. Phosphorylation at Tyr-699 by PTK6 or HCK leads to an increase of its transcriptional activity.

It localises to the cytoplasm. It is found in the nucleus. Functionally, carries out a dual function: signal transduction and activation of transcription. Mediates cellular responses to the cytokine KITLG/SCF and other growth factors. Binds to the GAS element and activates PRL-induced transcription. Positively regulates hematopoietic/erythroid differentiation. In Rattus norvegicus (Rat), this protein is Signal transducer and activator of transcription 5B (Stat5b).